Reading from the N-terminus, the 248-residue chain is Tetraspanin-17 (248 aa).

Residues 1-7 (MSEVRTG) lie on the Cytoplasmic side of the membrane. A helical transmembrane segment spans residues 8–28 (FLTMTTIILISIGLTMMGTGL). The Extracellular segment spans residues 29–44 (YQKTTMSSCIRETSSQ). The chain crosses the membrane as a helical span at residues 45 to 65 (FTLLGLLLLLIPQIGLYGICC). At 66–69 (RSKR) the chain is on the cytoplasmic side. Residues 70–90 (LFNFFFYGMVVLIIIVSYYSI) traverse the membrane as a helical segment. Residues 91–210 (KCSIYNTTFG…ILKAIVHQWK (120 aa)) are Extracellular-facing. N96, N109, and N141 each carry an N-linked (GlcNAc...) asparagine glycan. Residues 211-231 (YLSMFAYPALVLSCISLAIAW) form a helical membrane-spanning segment. Residues 232–248 (SLKETIHENEDYRGSYS) are Cytoplasmic-facing.

Belongs to the tetraspanin (TM4SF) family.

It is found in the membrane. May be involved in the regulation of cell differentiation. This chain is Tetraspanin-17 (TET17), found in Arabidopsis thaliana (Mouse-ear cress).